Consider the following 444-residue polypeptide: Protein cereblon (444 aa).

Residues 1-52 (MAGEGDPEDAAHNMGNHLPLLPAEEEEEDEIEMEVEDQDNKEPKKPNIINFD) form a disordered region. Positions 23-37 (AEEEEEDEIEMEVED) are enriched in acidic residues. The Lon N-terminal domain occupies 80-321 (CPVIPVLPQV…CELDIMNKCT (242 aa)). Residues 320–428 (CTSLCCKQCQ…LTRSALLPTI (109 aa)) enclose the CULT domain. 2 residues coordinate Zn(2+): cysteine 325 and cysteine 328. The (S)-thalidomide site is built by histidine 380, tryptophan 382, and tryptophan 388. Residues cysteine 393 and cysteine 396 each coordinate Zn(2+).

It belongs to the CRBN family. In terms of assembly, component of a DCX (DDB1-CUL4-X-box) protein ligase complex, at least composed of CRBN, CUL4A, DDB1 and RBX1. Interacts directly with DDB1. Interacts with KCNT1. Interacts with ILF2. Interacts with TRAF6 and ECSIT. Ubiquitinated, ubiquitination is mediated by its own DCX protein ligase complex.

The protein resides in the cytoplasm. The protein localises to the nucleus. It is found in the membrane. Its pathway is protein modification; protein ubiquitination. Its function is as follows. Substrate recognition component of a DCX (DDB1-CUL4-X-box) E3 protein ligase complex that mediates the ubiquitination and subsequent proteasomal degradation of target proteins, such as MEIS2, ILF2 or GLUL. Normal degradation of key regulatory proteins is required for normal limb outgrowth and expression of the fibroblast growth factor FGF8. Maintains presynaptic glutamate release and consequently cognitive functions, such as memory and learning, by negatively regulating large-conductance calcium-activated potassium (BK) channels in excitatory neurons. Likely to function by regulating the assembly and neuronal surface expression of BK channels via its interaction with KCNT1. May also be involved in regulating anxiety-like behaviors via a BK channel-independent mechanism. Plays a negative role in TLR4 signaling by interacting with TRAF6 and ECSIT, leading to inhibition of ECSIT ubiquitination, an important step of the signaling. The chain is Protein cereblon (CRBN) from Bos taurus (Bovine).